A 225-amino-acid polypeptide reads, in one-letter code: Ribose-5-phosphate isomerase A (225 aa).

Residues 26–29 (TGST), 82–85 (DGAD), and 95–98 (KGGG) contribute to the substrate site. The Proton acceptor role is filled by Glu104. Lys122 serves as a coordination point for substrate.

It belongs to the ribose 5-phosphate isomerase family. In terms of assembly, homodimer.

It carries out the reaction aldehydo-D-ribose 5-phosphate = D-ribulose 5-phosphate. The protein operates within carbohydrate degradation; pentose phosphate pathway; D-ribose 5-phosphate from D-ribulose 5-phosphate (non-oxidative stage): step 1/1. Functionally, catalyzes the reversible conversion of ribose-5-phosphate to ribulose 5-phosphate. The protein is Ribose-5-phosphate isomerase A of Streptococcus mutans serotype c (strain ATCC 700610 / UA159).